The following is a 1092-amino-acid chain: Neural cell adhesion molecule 1-B (1092 aa).

The signal sequence occupies residues methionine 1–alanine 19. Ig-like C2-type domains lie at leucine 20 to asparagine 108, glutamine 113 to glutamine 202, proline 208 to valine 295, proline 303 to glutamine 397, and proline 400 to valine 489. Residues leucine 20 to threonine 705 lie on the Extracellular side of the membrane. Disulfide bonds link cysteine 41-cysteine 93 and cysteine 136-cysteine 186. Asparagine 82 carries an N-linked (GlcNAc...) asparagine glycan. Heparin contacts are provided by residues arginine 149–lysine 153 and lysine 158–arginine 162. The N-linked (GlcNAc...) asparagine glycan is linked to asparagine 219. Cysteines 232 and 282 form a disulfide. 5 N-linked (GlcNAc...) asparagine glycosylation sites follow: asparagine 310, asparagine 341, asparagine 417, asparagine 443, and asparagine 472. An intrachain disulfide couples cysteine 323 to cysteine 379. A disulfide bridge connects residues cysteine 420 and cysteine 473. Fibronectin type-III domains are found at residues threonine 493–valine 592 and glutamate 595–proline 691. A helical transmembrane segment spans residues glycine 706 to valine 723. The Cytoplasmic portion of the chain corresponds to aspartate 724–alanine 1092. Residues lysine 754–asparagine 784 show a composition bias toward basic and acidic residues. Disordered regions lie at residues lysine 754–phenylalanine 1005 and threonine 1024–alanine 1092. 2 stretches are compositionally biased toward low complexity: residues threonine 820–threonine 832 and serine 839–threonine 851. Residues aspartate 860–proline 871 are compositionally biased toward polar residues. The segment covering proline 917–alanine 929 has biased composition (low complexity). A compositionally biased stretch (polar residues) spans alanine 968–glutamate 978. Basic and acidic residues predominate over residues alanine 1050 to valine 1068. The span at asparagine 1080–alanine 1092 shows a compositional bias: polar residues.

In terms of processing, polysialylated by ST8SIA2 and ST8SIA4. Polysialylation modulates cell interactions by confering both attractive and repulsive properties that are highly regulated by ST8SIA2 and ST8SIA4. Polysialylation is formed on a-2,3-linked sialic acid of core glycans.

The protein localises to the cell membrane. In terms of biological role, this protein is a cell adhesion molecule involved in neuron-neuron adhesion, neurite fasciculation, outgrowth of neurites, etc. The chain is Neural cell adhesion molecule 1-B from Xenopus laevis (African clawed frog).